A 420-amino-acid chain; its full sequence is Pyruvate dehydrogenase E1 component subunit alpha, mitochondrial (420 aa).

A mitochondrion-targeting transit peptide spans 1–33 (MLAASFKRQPSQLVRGLGAVLRTPTRIGHVRTM). 11 residues coordinate pyruvate: H112, Y138, R139, A177, G185, V187, D216, G217, A218, N245, and Y247. The thiamine diphosphate site is built by Y138 and R139. Thiamine diphosphate is bound by residues G185, V187, D216, G217, A218, and N245. D216 contacts Mg(2+). Residues N245 and Y247 each coordinate Mg(2+). H312 provides a ligand contact to thiamine diphosphate. Residue S313 is modified to Phosphoserine; by PDK1 and PDK2.

As to quaternary structure, pyruvate dehydrogenase (E1) is a tetramer of 2 alpha and 2 beta subunits. Eukaryotic pyruvate dehydrogenase (PDH) complexes are organized as a core consisting of the oligomeric dihydrolipoamide acetyl-transferase (E2), around which are arranged multiple copies of pyruvate dehydrogenase (E1), dihydrolipoamide dehydrogenase (E3) and protein X (E3BP) bound by non-covalent bonds. Requires thiamine diphosphate as cofactor. The cofactor is Mg(2+). In terms of processing, phosphorylated at Ser-313 by pyruvate dehydrogenase kinases PKP1 (PDK1) and PKP2 (PDK2), and dephosphorylated by pyruvate dehydrogenase phosphatases PTC5 and PTC6.

Its subcellular location is the mitochondrion matrix. It catalyses the reaction N(6)-[(R)-lipoyl]-L-lysyl-[protein] + pyruvate + H(+) = N(6)-[(R)-S(8)-acetyldihydrolipoyl]-L-lysyl-[protein] + CO2. With respect to regulation, E1 activity is regulated by phosphorylation (inactivation) and dephosphorylation (activation) of the alpha subunit. In terms of biological role, the pyruvate dehydrogenase complex catalyzes the overall conversion of pyruvate to acetyl-CoA and CO(2). This chain is Pyruvate dehydrogenase E1 component subunit alpha, mitochondrial (PDA1), found in Saccharomyces cerevisiae (strain ATCC 204508 / S288c) (Baker's yeast).